Reading from the N-terminus, the 245-residue chain is MDEFDFNAAPPEFQEIRWMVASIFLISGTGWIVNYVTTIRTALRDRTSGVTLLSLCNNLAWETVFAVIHRPPHLIAALVITVWLLVNIYVIYVSVKFARESQDVSPLLRRHLPVVTLLGFVGFLTGHIALSMHLGPTKALYWGGMICQVTLSASALGLLIQRGHTRGASPAMWLSRFIASSFGVPGLFVRAVYWPSAWGWADNILMRWLSGVFFLLDLSYGAIYYHISRSEHEVGASGSKMSKRE.

Transmembrane regions (helical) follow at residues 19–39, 48–68, 75–95, 112–132, 140–160, 177–197, and 208–228; these read MVAS…VTTI, SGVT…FAVI, IAAL…YVSV, LPVV…ALSM, LYWG…GLLI, FIAS…WPSA, and WLSG…YHIS.

The protein belongs to the paxB family.

It localises to the membrane. It participates in secondary metabolite biosynthesis; terpenoid biosynthesis. Terpene cyclase; part of the cluster that mediates the biosynthesis of shearones, diterpenoid pyrones (DPs) which are structurally diverse meroterpenoids consisting of a diterpene linked by a pyrone, and which may exhibit a range of bioactivities. Within the pathway, esdpB takes part to the biosynthesis of the molecular scaffold by catalyzing the cyclization of the prenyl group initiated by protonation and ring-opening of the epoxide to produce the diterpenoid pyrone scaffold. The molecular scaffold is commonly biosynthesized by a series of enzymes including the non-reducing polyketide synthase (NR-PKS) esdpA that generates an alpha-pyrone; the prenyltransferase esdpC that attaches a geranylgeranyl pyrophosphate (GGPP) produced by the GGPP synthase (GGPPS) esdpD onto the pyrone unit; the FAD-dependent monooxygenase esdpE that converts an olefin on the diterpene unit into an epoxide; and the terpene cyclase esdpB that catalyzes the cyclization reactions to give the molecular backbone shearone A. In the modification steps, esdpF oxidizes the hydroxy group to a ketone at C-3 and esdpG then attaches hydroxy groups at both C-11 and C-12. After that, esdpI hydroxylates at C-20 and esdpH hydroxylates at C-6'. The ether bridge is generated by nucleophilic attack of the hydroxy group at C-20 to the carbonyl carbon at C-3. EsdpH can also functions prior to esdpI. The different combinations of these modification enzymes lead to the production of diverse shearone derivatives, shearone I being the end product of the pathway. The alpha-ketoglutarate-dependent dioxygenase esdpJ seems not to be involved in this pathway. The chain is Terpene cyclase esdpB from Penicillium shearii (Eupenicillium shearii).